The sequence spans 346 residues: Elongation factor Ts (346 aa).

Residues 80 to 83 (TDFV) are involved in Mg(2+) ion dislocation from EF-Tu.

Belongs to the EF-Ts family.

The protein resides in the cytoplasm. Its function is as follows. Associates with the EF-Tu.GDP complex and induces the exchange of GDP to GTP. It remains bound to the aminoacyl-tRNA.EF-Tu.GTP complex up to the GTP hydrolysis stage on the ribosome. The chain is Elongation factor Ts from Streptococcus thermophilus (strain CNRZ 1066).